Reading from the N-terminus, the 62-residue chain is Cytotoxin 7 (62 aa).

A signal peptide spans 1–2; that stretch reads YT. Disulfide bonds link C5/C23, C16/C40, C44/C55, and C56/C61.

The protein belongs to the three-finger toxin family. Short-chain subfamily. Type IA cytotoxin sub-subfamily. As to quaternary structure, monomer in solution; Homodimer and oligomer in the presence of negatively charged lipids forming a pore with a size ranging between 20 and 30 Angstroms. As to expression, expressed by the venom gland.

Its subcellular location is the secreted. It is found in the target cell membrane. Its function is as follows. Shows cytolytic activity on many different cells by forming pore in lipid membranes. In vivo, increases heart rate or kills the animal by cardiac arrest. In addition, it binds to heparin with high affinity, interacts with Kv channel-interacting protein 1 (KCNIP1) in a calcium-independent manner, and binds to integrin alpha-V/beta-3 (ITGAV/ITGB3) with moderate affinity. The protein is Cytotoxin 7 of Naja sputatrix (Malayan spitting cobra).